The primary structure comprises 388 residues: Beta-1,4-galactosyltransferase 5 (388 aa).

Residues 1-14 (MRVRRGLLRLPRRS) are Cytoplasmic-facing. A helical; Signal-anchor for type II membrane protein membrane pass occupies residues 15-35 (LLAALFFFSLSSSLLYFVYVA). Residues 36 to 388 (PGIVNTYLFM…TPELAQVTEY (353 aa)) are Lumenal-facing. N-linked (GlcNAc...) asparagine glycosylation is found at N77, N81, N90, N111, and N128. C114 and C158 are oxidised to a cystine. UDP-alpha-D-galactose is bound by residues 169 to 173 (PFRNR), 208 to 210 (FNR), 235 to 236 (VD), Y264, and W296. C229 and C248 form a disulfide bridge. Residue D236 participates in Mn(2+) binding. 298-301 (GEDD) provides a ligand contact to N-acetyl-D-glucosamine. 329–330 (YH) is a UDP-alpha-D-galactose binding site. R340 is an N-acetyl-D-glucosamine binding site. N364 and N373 each carry an N-linked (GlcNAc...) asparagine glycan.

It belongs to the glycosyltransferase 7 family. (Microbial infection) Interacts with porcine reproductive and respiratory syndrome virus GP5. Mn(2+) serves as cofactor.

The protein resides in the golgi apparatus. The protein localises to the golgi stack membrane. It catalyses the reaction a beta-D-glucosyl-(1&lt;-&gt;1')-N-acylsphing-4-enine + UDP-alpha-D-galactose = a beta-D-Gal-(1-&gt;4)-beta-D-Glc-(1&lt;-&gt;1)-Cer(d18:1(4E)) + UDP + H(+). It participates in protein modification; protein glycosylation. It functions in the pathway sphingolipid metabolism. In terms of biological role, catalyzes the synthesis of lactosylceramide (LacCer) via the transfer of galactose from UDP-galactose to glucosylceramide (GlcCer). LacCer is the starting point in the biosynthesis of all gangliosides (membrane-bound glycosphingolipids) which play pivotal roles in the CNS including neuronal maturation and axonal and myelin formation. Plays a role in the glycosylation of BMPR1A and regulation of its protein stability. Essential for extraembryonic development during early embryogenesis. (Microbial infection) May play a role in the glycosylation of porcine reproductive and respiratory syndrome virus GP5 protein and may be involved in the regulation of viral proliferation. This Sus scrofa (Pig) protein is Beta-1,4-galactosyltransferase 5 (B4GALT5).